The chain runs to 733 residues: Hexamerin (733 aa).

The first 17 residues, 1–17 (MKTALVLILATATLAVA), serve as a signal peptide directing secretion. N-linked (GlcNAc...) asparagine glycans are attached at residues asparagine 199, asparagine 234, and asparagine 431.

Belongs to the hemocyanin family. Homohexamer.

Its subcellular location is the secreted. The protein localises to the extracellular space. Its function is as follows. Larval storage protein (LSP) which may serve as a store of amino acids for synthesis of adult proteins. In Blaberus discoidalis (Tropical cockroach), this protein is Hexamerin.